The chain runs to 125 residues: Ribonuclease VapC19 (125 aa).

The 120-residue stretch at 3 to 122 (LIDTTIAVDH…RHFPMFPDLQ (120 aa)) folds into the PINc domain. Asp-5 and Asp-93 together coordinate Mg(2+).

The protein belongs to the PINc/VapC protein family. The cofactor is Mg(2+).

In terms of biological role, toxic component of a type II toxin-antitoxin (TA) system. An RNase. Its toxic effect is neutralized by coexpression with cognate antitoxin VapB19. The polypeptide is Ribonuclease VapC19 (Mycobacterium tuberculosis (strain CDC 1551 / Oshkosh)).